The primary structure comprises 294 residues: Bidirectional sugar transporter SWEET13 (294 aa).

Topologically, residues 1–7 (MALTNNL) are extracellular. Residues 8–28 (WAFVFGILGNIISFVVFLAPV) form a helical membrane-spanning segment. Residues 10-97 (FVFGILGNII…VLFVSYANKK (88 aa)) form the MtN3/slv 1 domain. At 29 to 42 (PTFVRICKKKSTEG) the chain is on the cytoplasmic side. Residues 43-63 (FQSLPYVSALFSAMLWIYYAM) form a helical membrane-spanning segment. The Extracellular segment spans residues 64–69 (QKDGTA). A helical membrane pass occupies residues 70–90 (FLLITINAFGCVIETIYIVLF). Residues 91 to 104 (VSYANKKTRISTLK) lie on the Cytoplasmic side of the membrane. A helical membrane pass occupies residues 105 to 125 (VLGLLNFLGFAAIVLVCELLT). Over 126 to 132 (KGSTREK) the chain is Extracellular. A helical membrane pass occupies residues 133 to 153 (VLGGICVGFSVSVFAAPLSIM). A MtN3/slv 2 domain is found at 133–216 (VLGGICVGFS…MILYIIFKYY (84 aa)). Residues 154–166 (RVVVRTRSVEFMP) are Cytoplasmic-facing. The chain crosses the membrane as a helical span at residues 167-187 (FSLSLFLTISAVTWLFYGLAI). Residues 188–192 (KDFYV) are Extracellular-facing. Residues 193–213 (ALPNVLGAFLGAVQMILYIIF) traverse the membrane as a helical segment. At 214 to 294 (KYYKTPVAQK…NKDVQKQSQV (81 aa)) the chain is on the cytoplasmic side. Positions 273 to 294 (KSQNMTDPKDQINKDVQKQSQV) are disordered. The span at 279 to 294 (DPKDQINKDVQKQSQV) shows a compositional bias: basic and acidic residues.

The protein belongs to the SWEET sugar transporter family. In terms of assembly, forms heterooligomers with SWEET1, SWEET3, SWEET6, SWEET7, SWEET8, SWEET9, SWEET11 and SWEET17. In terms of tissue distribution, expressed at low levels in leaves.

It is found in the cell membrane. Mediates both low-affinity uptake and efflux of sugar across the plasma membrane. Involved in nurturing the male gametophyte. The polypeptide is Bidirectional sugar transporter SWEET13 (Arabidopsis thaliana (Mouse-ear cress)).